A 127-amino-acid chain; its full sequence is Major sperm protein isoform alpha (127 aa).

A2 carries the N-acetylalanine modification. An MSP domain is found at 9 to 126 (DINTQPSQKI…RRKNLPIEYN (118 aa)).

In terms of assembly, forms filaments 10 nm wide, with a characteristic substructure repeating axially at 9 nm. As to expression, sperm.

The protein localises to the cell projection. The protein resides in the pseudopodium. Its subcellular location is the cytoplasm. It is found in the cytoskeleton. Functionally, central component in molecular interactions underlying sperm crawling. Forms an extensive filament system that extends from sperm villipoda, along the leading edge of the pseudopod. The sequence is that of Major sperm protein isoform alpha from Ascaris suum (Pig roundworm).